The following is a 2252-amino-acid chain: RNA1 polyprotein (2252 aa).

Over 565–1140 (MITTLAQSIF…QGREFIVSNG (576 aa)) the chain is Cytoplasmic. The SF3 helicase domain maps to 733–899 (MKDLLELQKR…PGVIFDPDNA (167 aa)). Position 763 to 770 (763 to 770 (GPSHCGKS)) interacts with ATP. The helical transmembrane segment at 1141–1161 (GGILMIAAAIILVLVCGWGFW) threads the bilayer. The Lumenal portion of the chain corresponds to 1162–1187 (KAFVGLFTGSMSLGAALAGCQEAEVK). The Peptidase C3 domain occupies 1213-1422 (SYARSQAGNG…WACILPNPHL (210 aa)). Catalysis depends on for picornain 3C-like protease activity residues H1256, E1294, and C1386. The region spanning 1697–1825 (NEAINCDYSG…SVSPAVASWF (129 aa)) is the RdRp catalytic domain.

The protein belongs to the nepoviruses RNA1 polyprotein family. In terms of processing, specific enzymatic cleavages by picornain 3C-like protease in vivo yield mature proteins. Picornain 3C-like protease is autocatalytically processed. Post-translationally, VPg is uridylylated by the polymerase and is covalently linked to the 5'-end of genomic RNA. This uridylylated form acts as a nucleotide-peptide primer for the polymerase.

It localises to the host endoplasmic reticulum lumen. Its subcellular location is the host endoplasmic reticulum membrane. It carries out the reaction RNA(n) + a ribonucleoside 5'-triphosphate = RNA(n+1) + diphosphate. In terms of biological role, picornain 3C-like protease is a thiol protease that cleaves the P1 and P2 polyproteins. The protein is RNA1 polyprotein of Apium graveolens (Celery).